A 617-amino-acid chain; its full sequence is Dihydroxy-acid dehydratase (617 aa).

D81 is a binding site for Mg(2+). A [2Fe-2S] cluster-binding site is contributed by C122. Residues D123 and K124 each contribute to the Mg(2+) site. N6-carboxylysine is present on K124. C195 serves as a coordination point for [2Fe-2S] cluster. E492 contributes to the Mg(2+) binding site. S518 serves as the catalytic Proton acceptor.

This sequence belongs to the IlvD/Edd family. Homodimer. It depends on [2Fe-2S] cluster as a cofactor. Requires Mg(2+) as cofactor.

The enzyme catalyses (2R)-2,3-dihydroxy-3-methylbutanoate = 3-methyl-2-oxobutanoate + H2O. It carries out the reaction (2R,3R)-2,3-dihydroxy-3-methylpentanoate = (S)-3-methyl-2-oxopentanoate + H2O. The protein operates within amino-acid biosynthesis; L-isoleucine biosynthesis; L-isoleucine from 2-oxobutanoate: step 3/4. It participates in amino-acid biosynthesis; L-valine biosynthesis; L-valine from pyruvate: step 3/4. Functions in the biosynthesis of branched-chain amino acids. Catalyzes the dehydration of (2R,3R)-2,3-dihydroxy-3-methylpentanoate (2,3-dihydroxy-3-methylvalerate) into 2-oxo-3-methylpentanoate (2-oxo-3-methylvalerate) and of (2R)-2,3-dihydroxy-3-methylbutanoate (2,3-dihydroxyisovalerate) into 2-oxo-3-methylbutanoate (2-oxoisovalerate), the penultimate precursor to L-isoleucine and L-valine, respectively. This chain is Dihydroxy-acid dehydratase, found in Azorhizobium caulinodans (strain ATCC 43989 / DSM 5975 / JCM 20966 / LMG 6465 / NBRC 14845 / NCIMB 13405 / ORS 571).